A 213-amino-acid chain; its full sequence is Imidazole glycerol phosphate synthase subunit HisH (213 aa).

The Glutamine amidotransferase type-1 domain occupies 8–213 (TVALIDYGAG…FLSRFLDWNP (206 aa)). The active-site Nucleophile is the Cys91. Catalysis depends on residues His193 and Glu195.

Heterodimer of HisH and HisF.

It localises to the cytoplasm. The catalysed reaction is 5-[(5-phospho-1-deoxy-D-ribulos-1-ylimino)methylamino]-1-(5-phospho-beta-D-ribosyl)imidazole-4-carboxamide + L-glutamine = D-erythro-1-(imidazol-4-yl)glycerol 3-phosphate + 5-amino-1-(5-phospho-beta-D-ribosyl)imidazole-4-carboxamide + L-glutamate + H(+). The enzyme catalyses L-glutamine + H2O = L-glutamate + NH4(+). Its pathway is amino-acid biosynthesis; L-histidine biosynthesis; L-histidine from 5-phospho-alpha-D-ribose 1-diphosphate: step 5/9. Functionally, IGPS catalyzes the conversion of PRFAR and glutamine to IGP, AICAR and glutamate. The HisH subunit catalyzes the hydrolysis of glutamine to glutamate and ammonia as part of the synthesis of IGP and AICAR. The resulting ammonia molecule is channeled to the active site of HisF. The polypeptide is Imidazole glycerol phosphate synthase subunit HisH (Zymomonas mobilis subsp. mobilis (strain ATCC 31821 / ZM4 / CP4)).